We begin with the raw amino-acid sequence, 916 residues long: ATP-dependent RNA helicase DBP4 (916 aa).

The disordered stretch occupies residues Met-1–Arg-34. Positions Lys-12–Lys-33 are enriched in basic residues. A Q motif motif is present at residues Lys-58–Ala-86. Residues Leu-89–Val-263 enclose the Helicase ATP-binding domain. Ala-102–Thr-109 lines the ATP pocket. A DEAD box motif is present at residues Asp-211–Asp-214. The Helicase C-terminal domain maps to Gly-277 to Gln-442. 3 disordered regions span residues Ala-519 to Arg-554, Asp-575 to Gly-667, and Ala-752 to Ala-916. The segment covering Ala-539–Arg-554 has biased composition (basic and acidic residues). Residues Ala-576–Ser-593 are compositionally biased toward acidic residues. Residues Glu-608–Arg-623 are compositionally biased toward basic and acidic residues. The span at Ser-630–Asn-642 shows a compositional bias: acidic residues. 3 stretches are compositionally biased toward basic and acidic residues: residues Gly-645–Arg-655, Trp-766–Lys-788, and Lys-797–Ala-808. Acidic residues-rich tracts occupy residues Asp-810 to Glu-826 and Glu-844 to Glu-871.

This sequence belongs to the DEAD box helicase family. DDX10/DBP4 subfamily. As to quaternary structure, interacts with the U3 and U14 snoRNAs. Associates with pre-ribosomal complexes.

It localises to the nucleus. Its subcellular location is the nucleolus. The catalysed reaction is ATP + H2O = ADP + phosphate + H(+). In terms of biological role, ATP-dependent RNA helicase required for ribosome biogenesis. Involved in the release of U14 snoRNA in pre-ribosomal complexes. Required for pre-rRNA cleavage at site A2. The sequence is that of ATP-dependent RNA helicase DBP4 (DBP4) from Mycosarcoma maydis (Corn smut fungus).